A 372-amino-acid polypeptide reads, in one-letter code: Anhydro-N-acetylmuramic acid kinase (372 aa).

18 to 25 (GTSLDGID) contributes to the ATP binding site.

This sequence belongs to the anhydro-N-acetylmuramic acid kinase family.

It catalyses the reaction 1,6-anhydro-N-acetyl-beta-muramate + ATP + H2O = N-acetyl-D-muramate 6-phosphate + ADP + H(+). It participates in amino-sugar metabolism; 1,6-anhydro-N-acetylmuramate degradation. It functions in the pathway cell wall biogenesis; peptidoglycan recycling. In terms of biological role, catalyzes the specific phosphorylation of 1,6-anhydro-N-acetylmuramic acid (anhMurNAc) with the simultaneous cleavage of the 1,6-anhydro ring, generating MurNAc-6-P. Is required for the utilization of anhMurNAc either imported from the medium or derived from its own cell wall murein, and thus plays a role in cell wall recycling. This Thiobacillus denitrificans (strain ATCC 25259 / T1) protein is Anhydro-N-acetylmuramic acid kinase.